The chain runs to 341 residues: Glycerol-3-phosphate dehydrogenase [NAD(P)+] (341 aa).

Residues Ser-14, Phe-15, Arg-35, and Lys-108 each coordinate NADPH. The sn-glycerol 3-phosphate site is built by Lys-108 and Gly-136. An NADPH-binding site is contributed by Ala-140. 5 residues coordinate sn-glycerol 3-phosphate: Lys-191, Asp-244, Ser-254, Arg-255, and Asn-256. The active-site Proton acceptor is the Lys-191. An NADPH-binding site is contributed by Arg-255. Residues Val-279 and Glu-281 each contribute to the NADPH site.

It belongs to the NAD-dependent glycerol-3-phosphate dehydrogenase family.

Its subcellular location is the cytoplasm. It carries out the reaction sn-glycerol 3-phosphate + NAD(+) = dihydroxyacetone phosphate + NADH + H(+). It catalyses the reaction sn-glycerol 3-phosphate + NADP(+) = dihydroxyacetone phosphate + NADPH + H(+). It functions in the pathway membrane lipid metabolism; glycerophospholipid metabolism. Functionally, catalyzes the reduction of the glycolytic intermediate dihydroxyacetone phosphate (DHAP) to sn-glycerol 3-phosphate (G3P), the key precursor for phospholipid synthesis. This Pseudomonas fluorescens (strain SBW25) protein is Glycerol-3-phosphate dehydrogenase [NAD(P)+].